The chain runs to 292 residues: ATP synthase gamma chain (292 aa).

It belongs to the ATPase gamma chain family. In terms of assembly, F-type ATPases have 2 components, CF(1) - the catalytic core - and CF(0) - the membrane proton channel. CF(1) has five subunits: alpha(3), beta(3), gamma(1), delta(1), epsilon(1). CF(0) has three main subunits: a, b and c.

Its subcellular location is the cell inner membrane. Functionally, produces ATP from ADP in the presence of a proton gradient across the membrane. The gamma chain is believed to be important in regulating ATPase activity and the flow of protons through the CF(0) complex. This chain is ATP synthase gamma chain, found in Chlorobaculum tepidum (strain ATCC 49652 / DSM 12025 / NBRC 103806 / TLS) (Chlorobium tepidum).